The following is a 271-amino-acid chain: Glutamate racemase (271 aa).

Substrate-binding positions include 10–11 (DS) and 42–43 (YG). Cysteine 74 (proton donor/acceptor) is an active-site residue. 75 to 76 (NT) contacts substrate. Cysteine 189 (proton donor/acceptor) is an active-site residue. 190–191 (TH) provides a ligand contact to substrate.

It belongs to the aspartate/glutamate racemases family.

The catalysed reaction is L-glutamate = D-glutamate. Its pathway is cell wall biogenesis; peptidoglycan biosynthesis. Functionally, provides the (R)-glutamate required for cell wall biosynthesis. This Bartonella bacilliformis (strain ATCC 35685 / KC583 / Herrer 020/F12,63) protein is Glutamate racemase.